The primary structure comprises 337 residues: Phosphate acyltransferase (337 aa).

This sequence belongs to the PlsX family. In terms of assembly, homodimer. Probably interacts with PlsY.

The protein localises to the cytoplasm. The enzyme catalyses a fatty acyl-[ACP] + phosphate = an acyl phosphate + holo-[ACP]. It participates in lipid metabolism; phospholipid metabolism. Functionally, catalyzes the reversible formation of acyl-phosphate (acyl-PO(4)) from acyl-[acyl-carrier-protein] (acyl-ACP). This enzyme utilizes acyl-ACP as fatty acyl donor, but not acyl-CoA. The protein is Phosphate acyltransferase of Aromatoleum aromaticum (strain DSM 19018 / LMG 30748 / EbN1) (Azoarcus sp. (strain EbN1)).